Reading from the N-terminus, the 136-residue chain is Small ribosomal subunit protein bS6 (136 aa).

A disordered region spans residues 96-136 (VTEPSALARSGSDAEADRAPADEGSVEAAGAEPGSEAEAEA).

The protein belongs to the bacterial ribosomal protein bS6 family.

Binds together with bS18 to 16S ribosomal RNA. This chain is Small ribosomal subunit protein bS6, found in Methylococcus capsulatus (strain ATCC 33009 / NCIMB 11132 / Bath).